The sequence spans 545 residues: MAKRIIYNEQARRALERGIDILAESVAVTLGPKGRNVVLEKKFGAPQIINDGVTIAKEIELEDHIENTGVALIRQAASKTNDAAGDGTTTATVLAHAMVKAGLRNVAAGANAITLKKGIDKATEFLVGKIQDNSKPISDSNAIAQCGTIAAGNDEEVGQMIANAMDKVGKEGVISLEEGKSMTTELEVTEGMRFDKGYISPYFATDTERMEAVLDEPYILLTDKKIALVQDLVPVLEQIAKTGKPLVIIAEDIEKEALATLVVNRLRGVLNVAAVKAPGFGDRRKAMLEDMAVLTNGQLITEDAGLKLENATLDMLGTGRRITINKETTTIVAEGNEQAVKARCDQIKKQMDETDSSYDKEKLQERLAKLAGGVAVIKVGAATETEMKDKKLRLEDAINATKAAVEEGIVPGGGTTLAHLSPILKEWADKNLKGEELIGANIVEASLTAPLMRIAENAGSNGAVIAENVKTKPFNDGFNAATGEYVDMSSAGIVDPAKVTRSGLQNAASIAGMVLTTECIVADLPEKKDSASPAGAPGMGGDFDY.

Residues 29–32, 86–90, Gly-413, 479–481, and Asp-495 each bind ATP; these read TLGP, DGTTT, and NAA.

It belongs to the chaperonin (HSP60) family. As to quaternary structure, forms a cylinder of 14 subunits composed of two heptameric rings stacked back-to-back. Interacts with the co-chaperonin GroES.

The protein resides in the cytoplasm. It carries out the reaction ATP + H2O + a folded polypeptide = ADP + phosphate + an unfolded polypeptide.. Its function is as follows. Together with its co-chaperonin GroES, plays an essential role in assisting protein folding. The GroEL-GroES system forms a nano-cage that allows encapsulation of the non-native substrate proteins and provides a physical environment optimized to promote and accelerate protein folding. The protein is Chaperonin GroEL 2 of Prochlorococcus marinus (strain MIT 9215).